The sequence spans 323 residues: MTEQTSEATVVNNSPAPTIPKIKREKPTPEEIEERRKLKQLEVVPEGFSRKQWKRELKKQRWQDTKQEYLEVQREKKRLARQRKRERLKDLDENDELRKAQPIPSRQISTNNVSVIIDCDFDELMHEKEIVSLSNQIKACYSAMRHCTYKLPIQITSFNKRLKQRFEAQLHDYHLWQGNISFTDRSLTEYVTGAPNSESKDNDGNSNSNTTNSTDTINTENLVYLTADTDEEITKLEPNHTYIIGGIVDKNRHKQLCYNKAKELGIKVARLPIGKYIEMNGRHVLVTSHVYELLCKWFENDGDWETAFNKVLPPRKIKSKSPS.

Residues 1 to 16 are compositionally biased toward polar residues; the sequence is MTEQTSEATVVNNSPA. 2 disordered regions span residues 1 to 34 and 192 to 215; these read MTEQTSEATVVNNSPAPTIPKIKREKPTPEEIEE and TGAPNSESKDNDGNSNSNTTNSTD. Basic and acidic residues predominate over residues 25-34; the sequence is EKPTPEEIEE. The region spanning 99–319 is the SAM-dependent MTase TRM10-type domain; it reads KAQPIPSRQI…KVLPPRKIKS (221 aa). Positions 204–215 are enriched in low complexity; it reads GNSNSNTTNSTD. Residues 225 to 226, G245, 249 to 253, C257, L271, and 283 to 285 contribute to the S-adenosyl-L-methionine site; these read LT, DKNRH, and HVL. The active-site Proton acceptor is the D249.

The protein belongs to the class IV-like SAM-binding methyltransferase superfamily. TRM10 family. In terms of assembly, monomer.

The protein resides in the cytoplasm. It is found in the nucleus. It catalyses the reaction guanosine(9) in tRNA + S-adenosyl-L-methionine = N(1)-methylguanosine(9) in tRNA + S-adenosyl-L-homocysteine + H(+). In terms of biological role, S-adenosyl-L-methionine-dependent guanine N(1)-methyltransferase that catalyzes the formation of N(1)-methylguanine at position 9 (m1G9) in cytoplasmic tRNA. The polypeptide is tRNA (guanine(9)-N1)-methyltransferase (Candida albicans (strain SC5314 / ATCC MYA-2876) (Yeast)).